Reading from the N-terminus, the 202-residue chain is Glycerol-3-phosphate acyltransferase (202 aa).

Transmembrane regions (helical) follow at residues 2–22 (INLL…AVVV), 51–71 (KAAI…VLLA), 80–100 (VDET…LFPL), 116–136 (ILFA…LIIA), 137–157 (FFFR…PFFY), and 158–178 (VLMN…VLLI).

Belongs to the PlsY family. In terms of assembly, probably interacts with PlsX.

The protein resides in the cell inner membrane. The catalysed reaction is an acyl phosphate + sn-glycerol 3-phosphate = a 1-acyl-sn-glycero-3-phosphate + phosphate. The protein operates within lipid metabolism; phospholipid metabolism. Catalyzes the transfer of an acyl group from acyl-phosphate (acyl-PO(4)) to glycerol-3-phosphate (G3P) to form lysophosphatidic acid (LPA). This enzyme utilizes acyl-phosphate as fatty acyl donor, but not acyl-CoA or acyl-ACP. The chain is Glycerol-3-phosphate acyltransferase from Cupriavidus metallidurans (strain ATCC 43123 / DSM 2839 / NBRC 102507 / CH34) (Ralstonia metallidurans).